The sequence spans 369 residues: Uroporphyrinogen decarboxylase (369 aa).

Substrate contacts are provided by residues 28 to 32 (RQAGR), aspartate 78, tyrosine 154, serine 209, and histidine 339.

It belongs to the uroporphyrinogen decarboxylase family. In terms of assembly, homodimer.

It localises to the cytoplasm. The catalysed reaction is uroporphyrinogen III + 4 H(+) = coproporphyrinogen III + 4 CO2. It participates in porphyrin-containing compound metabolism; protoporphyrin-IX biosynthesis; coproporphyrinogen-III from 5-aminolevulinate: step 4/4. Catalyzes the decarboxylation of four acetate groups of uroporphyrinogen-III to yield coproporphyrinogen-III. In Polaromonas naphthalenivorans (strain CJ2), this protein is Uroporphyrinogen decarboxylase.